Consider the following 283-residue polypeptide: Gap junction beta-1 protein (283 aa).

Over 1–22 the chain is Cytoplasmic; that stretch reads MNWTGLYTLLSGVNRHSTAIGR. A helical membrane pass occupies residues 23–45; that stretch reads VWLSVIFIFRIMVLVVAAESVWG. Residues 46-75 lie on the Extracellular side of the membrane; sequence DEKSSFICNTLQPGCNSVCYDHFFPISHVR. The helical transmembrane segment at 76 to 95 threads the bilayer; the sequence is LWSLQLILVSTPALLVAMHV. Over 96 to 130 the chain is Cytoplasmic; that stretch reads AHQQHIEKKMLRLEGHGDPLHLEEVKRHKVHISGT. A helical membrane pass occupies residues 131 to 153; it reads LWWTYVISVVFRLLFEAVFMYVF. Over 154–191 the chain is Extracellular; the sequence is YLLYPGYAMVRLVKCEAFPCPNTVDCFVSRPTEKTVFT. A helical membrane pass occupies residues 192-214; sequence VFMLAASGICIILNVAEVVYLII. The Cytoplasmic segment spans residues 215 to 283; that stretch reads RACARRAQRR…AEKSDRCSAC (69 aa). Ser-233, Ser-258, Ser-266, and Ser-277 each carry phosphoserine.

This sequence belongs to the connexin family. Beta-type (group I) subfamily. As to quaternary structure, a connexon is composed of a hexamer of connexins. Interacts with CNST.

The protein localises to the cell membrane. The protein resides in the cell junction. It localises to the gap junction. Functionally, one gap junction consists of a cluster of closely packed pairs of transmembrane channels, the connexons, through which materials of low MW diffuse from one cell to a neighboring cell. This is Gap junction beta-1 protein (Gjb1) from Mus musculus (Mouse).